Consider the following 172-residue polypeptide: RNA pyrophosphohydrolase (172 aa).

Positions 6-149 constitute a Nudix hydrolase domain; it reads GYRLNVGIVI…KRDVYRRAMK (144 aa). The short motif at 38 to 59 is the Nudix box element; the sequence is GGIDDGETPEQAMFRELYEEVG.

It belongs to the Nudix hydrolase family. RppH subfamily. A divalent metal cation is required as a cofactor.

In terms of biological role, accelerates the degradation of transcripts by removing pyrophosphate from the 5'-end of triphosphorylated RNA, leading to a more labile monophosphorylated state that can stimulate subsequent ribonuclease cleavage. The protein is RNA pyrophosphohydrolase of Vibrio vulnificus (strain CMCP6).